The following is a 169-amino-acid chain: Inorganic pyrophosphatase (169 aa).

An N-formylmethionine modification is found at methionine 1. Substrate-binding residues include lysine 28, arginine 42, and tyrosine 54. Mg(2+)-binding residues include aspartate 64, aspartate 69, and aspartate 101. A substrate-binding site is contributed by tyrosine 138.

This sequence belongs to the PPase family. In terms of assembly, homohexamer. Mg(2+) serves as cofactor.

It is found in the cytoplasm. The catalysed reaction is diphosphate + H2O = 2 phosphate + H(+). Functionally, catalyzes the hydrolysis of inorganic pyrophosphate (PPi) forming two phosphate ions. The sequence is that of Inorganic pyrophosphatase from Nostoc sp. (strain PCC 7120 / SAG 25.82 / UTEX 2576).